A 98-amino-acid polypeptide reads, in one-letter code: Tan_12Cys (98 aa).

Residues 1–21 form the signal peptide; that stretch reads MNLKVLFLLAMVLVTLCLGED. The propeptide occupies 22–28; sequence RVTDRRK.

It belongs to the teretoxin C (TC) superfamily. In terms of processing, contains 6 disulfide bonds. Expressed by the venom duct.

Its subcellular location is the secreted. In Terebra anilis (Auger snail), this protein is Tan_12Cys.